The sequence spans 361 residues: Transcription factor TCP10 (361 aa).

A TCP domain is found at 29-87; it reads RKDRHSKVFTSKGPRDRRVRLSAHTAIQFYDVQDRLGYDRPSKAVDWLIKKAKTAIDKL. 2 disordered regions span residues 220 to 259 and 295 to 317; these read DLTM…QPSM and SWDH…SMFA. The span at 295–304 shows a compositional bias: basic and acidic residues; the sequence is SWDHHQTTSD.

As to quaternary structure, interacts with AHP1, AHP2 and AHP3. Interacts with SPL. As to expression, mostly detected in lateral organs, such as leaves and flowers. Expressed in cotyledons, particularly in the vascular region, in leaves, roots, stems, buds, flowers and immature siliques.

It localises to the nucleus. Functionally, plays a pivotal role in the control of morphogenesis of shoot organs by negatively regulating the expression of boundary-specific genes such as CUC genes, probably through the induction of miRNA (e.g. miR164). Participates in ovule development. This Arabidopsis thaliana (Mouse-ear cress) protein is Transcription factor TCP10 (TCP10).